The following is a 500-amino-acid chain: NAD(P)H-quinone oxidoreductase chain 4, chloroplastic (500 aa).

14 helical membrane passes run 4-24 (FPWL…IFLL), 37-57 (LCIC…HFQL), 87-107 (IGPI…AWPV), 111-131 (AQLF…SFSS), 134-154 (LLLF…LLSM), 167-187 (FILY…GIGL), 208-228 (ALEV…LPII), 242-262 (HYST…YGLV), 272-292 (AHCL…IYAA), 305-325 (IAYS…SLSD), 330-350 (GAIL…FLAG), 386-406 (LALP…GIIT), 416-436 (ILIA…SLSM), and 462-482 (LFVS…PDFV).

It belongs to the complex I subunit 4 family.

The protein localises to the plastid. It is found in the chloroplast thylakoid membrane. It carries out the reaction a plastoquinone + NADH + (n+1) H(+)(in) = a plastoquinol + NAD(+) + n H(+)(out). It catalyses the reaction a plastoquinone + NADPH + (n+1) H(+)(in) = a plastoquinol + NADP(+) + n H(+)(out). This is NAD(P)H-quinone oxidoreductase chain 4, chloroplastic from Oenothera parviflora (Small-flowered evening primrose).